The sequence spans 495 residues: ATP-dependent RNA helicase dbp3 (495 aa).

Residues methionine 1 to histidine 14 show a composition bias toward basic and acidic residues. The interval methionine 1–proline 49 is disordered. Basic residues predominate over residues arginine 15–lysine 27. The Q motif signature appears at serine 97–glutamine 105. The Helicase ATP-binding domain maps to tryptophan 109–valine 284. Alanine 122–threonine 129 contacts ATP. A DEAD box motif is present at residues aspartate 231–aspartate 234. The Helicase C-terminal domain occupies arginine 315–glycine 464.

The protein belongs to the DEAD box helicase family. DDX5/DBP2 subfamily.

The protein localises to the nucleus. It localises to the nucleolus. The catalysed reaction is ATP + H2O = ADP + phosphate + H(+). Functionally, ATP-dependent RNA helicase required for 60S ribosomal subunit synthesis. Involved in efficient pre-rRNA processing, predominantly at site A3, which is necessary for the normal formation of 25S and 5.8S rRNAs. The protein is ATP-dependent RNA helicase dbp3 (dbp3) of Aspergillus niger (strain ATCC MYA-4892 / CBS 513.88 / FGSC A1513).